A 779-amino-acid chain; its full sequence is Acyl-homoserine lactone acylase PvdQ (779 aa).

The first 25 residues, 1-25 (MIISRPLCSFVFAGLSFAVILPAQA), serve as a signal peptide directing secretion. A propeptide spans 202-223 (AQQAQALQLAAARNQRFALERG) (spacer peptide). Catalysis depends on serine 224, which acts as the Nucleophile. Polar residues predominate over residues 731–746 (ESSNPQSAHSSDQTEA). Positions 731 to 750 (ESSNPQSAHSSDQTEAFSKK) are disordered.

It belongs to the peptidase S45 family. In terms of assembly, heterodimer of an alpha subunit and a beta subunit processed from the same precursor.

Its subcellular location is the periplasm. The enzyme catalyses an N-acyl-L-homoserine lactone + H2O = L-homoserine lactone + a carboxylate. In terms of biological role, catalyzes the deacylation of acyl-homoserine lactone (AHL or acyl-HSL), releasing homoserine lactone (HSL) and the corresponding fatty acid. Possesses a specificity for the degradation of long-chain acyl-HSLs (side chains of 11 to 14 carbons in length). In Pseudomonas syringae pv. syringae (strain B728a), this protein is Acyl-homoserine lactone acylase PvdQ (pvdQ).